Reading from the N-terminus, the 219-residue chain is Proteasome subunit beta type-9 (219 aa).

A propeptide spans 1-20 (MLRTGAPNGDLPRAGEVHTG) (removed in mature form). The Nucleophile role is filled by T21. 2 positions are modified to N6-acetyllysine: K53 and K109.

Belongs to the peptidase T1B family. As to quaternary structure, the 26S proteasome consists of a 20S proteasome core and two 19S regulatory subunits. The 20S proteasome core is composed of 28 subunits that are arranged in four stacked rings, resulting in a barrel-shaped structure. The two end rings are each formed by seven alpha subunits, and the two central rings are each formed by seven beta subunits. The catalytic chamber with the active sites is on the inside of the barrel. Component of the immunoproteasome, where it displaces the equivalent housekeeping subunit PSMB6. Component of the spermatoproteasome, a form of the proteasome specifically found in testis. Autocleaved. The resulting N-terminal Thr residue of the mature subunit is responsible for the nucleophile proteolytic activity.

The protein resides in the cytoplasm. It localises to the nucleus. The catalysed reaction is Cleavage of peptide bonds with very broad specificity.. Its function is as follows. The proteasome is a multicatalytic proteinase complex which is characterized by its ability to cleave peptides with Arg, Phe, Tyr, Leu, and Glu adjacent to the leaving group at neutral or slightly basic pH. The proteasome has an ATP-dependent proteolytic activity. This subunit is involved in antigen processing to generate class I binding peptides. The polypeptide is Proteasome subunit beta type-9 (PSMB9) (Bos taurus (Bovine)).